The chain runs to 374 residues: GDSL esterase/lipase At3g50400 (374 aa).

Residues 1–26 (MKKSIFFVPVLVLFFFGSRFSRVASA) form the signal peptide. Catalysis depends on Ser-41, which acts as the Nucleophile. 2 N-linked (GlcNAc...) asparagine glycosylation sites follow: Asn-104 and Asn-125. Residues Asp-339 and His-342 contribute to the active site.

It belongs to the 'GDSL' lipolytic enzyme family.

It localises to the secreted. The chain is GDSL esterase/lipase At3g50400 from Arabidopsis thaliana (Mouse-ear cress).